The sequence spans 462 residues: MLDFAIFAVTFLLALVGAVLYLYPASRQAAGIPGITPTEEKDGNLPDIVNSGSLHEFLVNLHERYGPVVSFWFGRRLVVSLGTVDVLKQHINPNKTSDPFETMLKSLLRYQSGGGSVSENHMRKKLYENGVTDSLKSNFALLLKLSEELLDKWLSYPETQHVPLSQHMLGFAMKSVTQMVMGSTFEDDQEVIRFQKNHGTVWSEIGKGFLDGSLDKNMTRKKQYEDALMQLESVLRNIIKERKGRNFSQHIFIDSLVQGNLNDQQILEDSMIFSLASCIITAKLCTWAICFLTTSEEVQKKLYEEINQVFGNGPVTPEKIEQLRYCQHVLCETVRTAKLTPVSAQLQDIEGKIDRFIIPRETLVLYALGVVLQDPNTWPSPHKFDPDRFDDELVMKTFSSLGFSGTQECPELRFAYMVTTVLLSVLVKRLHLLSVEGQVIETKYELVTSSREEAWITVSKRY.

The chain crosses the membrane as a helical span at residues 4 to 24 (FAIFAVTFLLALVGAVLYLYP). A heme-binding site is contributed by Cys-409.

The protein belongs to the cytochrome P450 family. Requires heme as cofactor.

It localises to the membrane. This Homo sapiens (Human) protein is Cytochrome P450 20A1 (CYP20A1).